The primary structure comprises 61 residues: Large ribosomal subunit protein uL30 (61 aa).

This sequence belongs to the universal ribosomal protein uL30 family. In terms of assembly, part of the 50S ribosomal subunit.

This is Large ribosomal subunit protein uL30 from Methylococcus capsulatus (strain ATCC 33009 / NCIMB 11132 / Bath).